We begin with the raw amino-acid sequence, 176 residues long: MKASGTLREYKVVGRLLPSAKNPTPPLYRMRIFAPNHVVAKSRFWYFVSQLRKMKKANGETVYCGLVHEQSPLKVKNFGIWLRYDSRSGTHNMYREYRDLTTSGAVTQCYRDMGARHRARAHAIQIMKVQVIAANKCRRAAIKQFHDSKIKFPLPHRVLRRQHKPRFTTRRPQTFF.

Belongs to the eukaryotic ribosomal protein eL20 family. In terms of assembly, component of the large ribosomal subunit.

The protein resides in the cytoplasm. In terms of biological role, component of the large ribosomal subunit. The ribosome is a large ribonucleoprotein complex responsible for the synthesis of proteins in the cell. The polypeptide is Large ribosomal subunit protein eL20 (rpl18a) (Ictalurus punctatus (Channel catfish)).